Reading from the N-terminus, the 203-residue chain is Recombination protein RecR (203 aa).

A C4-type zinc finger spans residues 56–71 (CAVCGNVSDDERCRIC). The Toprim domain maps to 79–179 (ALVCVVEEPK…TVTRIASGLP (101 aa)).

It belongs to the RecR family.

In terms of biological role, may play a role in DNA repair. It seems to be involved in an RecBC-independent recombinational process of DNA repair. It may act with RecF and RecO. This is Recombination protein RecR from Mycobacterium ulcerans (strain Agy99).